A 356-amino-acid polypeptide reads, in one-letter code: Nicotinate-nucleotide--dimethylbenzimidazole phosphoribosyltransferase (356 aa).

Catalysis depends on Glu317, which acts as the Proton acceptor.

The protein belongs to the CobT family. As to quaternary structure, homodimer.

The enzyme catalyses 5,6-dimethylbenzimidazole + nicotinate beta-D-ribonucleotide = alpha-ribazole 5'-phosphate + nicotinate + H(+). Its pathway is nucleoside biosynthesis; alpha-ribazole biosynthesis; alpha-ribazole from 5,6-dimethylbenzimidazole: step 1/2. In terms of biological role, catalyzes the synthesis of alpha-ribazole-5'-phosphate from nicotinate mononucleotide (NAMN) and 5,6-dimethylbenzimidazole (DMB). This chain is Nicotinate-nucleotide--dimethylbenzimidazole phosphoribosyltransferase, found in Salmonella agona (strain SL483).